A 229-amino-acid polypeptide reads, in one-letter code: 5'-methylthioadenosine/S-adenosylhomocysteine nucleosidase (229 aa).

Glu12 serves as the catalytic Proton acceptor. Residues Gly78, Met152, and 173 to 174 (ME) each bind substrate. Residue Asp197 is the Proton donor of the active site.

This sequence belongs to the PNP/UDP phosphorylase family. MtnN subfamily.

The enzyme catalyses S-adenosyl-L-homocysteine + H2O = S-(5-deoxy-D-ribos-5-yl)-L-homocysteine + adenine. The catalysed reaction is S-methyl-5'-thioadenosine + H2O = 5-(methylsulfanyl)-D-ribose + adenine. It catalyses the reaction 5'-deoxyadenosine + H2O = 5-deoxy-D-ribose + adenine. It participates in amino-acid biosynthesis; L-methionine biosynthesis via salvage pathway; S-methyl-5-thio-alpha-D-ribose 1-phosphate from S-methyl-5'-thioadenosine (hydrolase route): step 1/2. Functionally, catalyzes the irreversible cleavage of the glycosidic bond in both 5'-methylthioadenosine (MTA) and S-adenosylhomocysteine (SAH/AdoHcy) to adenine and the corresponding thioribose, 5'-methylthioribose and S-ribosylhomocysteine, respectively. Also cleaves 5'-deoxyadenosine, a toxic by-product of radical S-adenosylmethionine (SAM) enzymes, into 5-deoxyribose and adenine. The protein is 5'-methylthioadenosine/S-adenosylhomocysteine nucleosidase of Oceanobacillus iheyensis (strain DSM 14371 / CIP 107618 / JCM 11309 / KCTC 3954 / HTE831).